Reading from the N-terminus, the 317-residue chain is Pectinesterase 31 (317 aa).

2 residues coordinate substrate: Thr91 and Gln121. The Proton donor role is filled by Asp144. Residue Asp165 is the Nucleophile of the active site. Substrate is bound by residues Arg222 and Trp224.

The protein belongs to the pectinesterase family. In terms of tissue distribution, expressed in siliques.

The enzyme catalyses [(1-&gt;4)-alpha-D-galacturonosyl methyl ester](n) + n H2O = [(1-&gt;4)-alpha-D-galacturonosyl](n) + n methanol + n H(+). It functions in the pathway glycan metabolism; pectin degradation; 2-dehydro-3-deoxy-D-gluconate from pectin: step 1/5. Does not require salt for activity. Not inhibited by kiwi pectin methylesterase inhibitor (PMEI). Its function is as follows. Acts in the modification of cell walls via demethylesterification of cell wall pectin. Acts in a blockwise manner, resulting in a cell wall rigidification. This Arabidopsis thaliana (Mouse-ear cress) protein is Pectinesterase 31 (PME31).